Reading from the N-terminus, the 332-residue chain is L-lactate dehydrogenase A chain (332 aa).

Lys-5 carries the post-translational modification N6-acetyllysine; alternate. Position 5 is an N6-succinyllysine; alternate (Lys-5). Lys-14 bears the N6-acetyllysine mark. Thr-18 bears the Phosphothreonine mark. Position 29–57 (29–57) interacts with NAD(+); the sequence is GAVGMACAISILMKDLADELALVDVIEDK. At Lys-57 the chain carries N6-acetyllysine; alternate. Residue Lys-57 forms a Glycyl lysine isopeptide (Lys-Gly) (interchain with G-Cter in SUMO2); alternate linkage. An N6-acetyllysine modification is found at Lys-81. Arg-99 lines the NAD(+) pocket. A substrate-binding site is contributed by Arg-106. The residue at position 118 (Lys-118) is an N6-acetyllysine; alternate. Lys-118 carries the post-translational modification N6-succinyllysine; alternate. Lys-126 is modified (N6-acetyllysine). Asn-138 lines the NAD(+) pocket. Substrate is bound by residues Asn-138 and Arg-169. Residue His-193 is the Proton acceptor of the active site. An N6-acetyllysine modification is found at Lys-232. Phosphotyrosine is present on Tyr-239. Lys-243 carries the post-translational modification N6-acetyllysine. Thr-248 contacts substrate. Residues Thr-309 and Thr-322 each carry the phosphothreonine modification.

The protein belongs to the LDH/MDH superfamily. LDH family. As to quaternary structure, homotetramer. Interacts with PTEN upstream reading frame protein MP31. ISGylated.

The protein resides in the cytoplasm. It carries out the reaction (S)-lactate + NAD(+) = pyruvate + NADH + H(+). The protein operates within fermentation; pyruvate fermentation to lactate; (S)-lactate from pyruvate: step 1/1. Interconverts simultaneously and stereospecifically pyruvate and lactate with concomitant interconversion of NADH and NAD(+). The polypeptide is L-lactate dehydrogenase A chain (LDHA) (Monodelphis domestica (Gray short-tailed opossum)).